A 180-amino-acid polypeptide reads, in one-letter code: ATP-dependent protease subunit HslV (180 aa).

Thr5 is a catalytic residue. The Na(+) site is built by Gly161, Cys164, and Thr167.

This sequence belongs to the peptidase T1B family. HslV subfamily. A double ring-shaped homohexamer of HslV is capped on each side by a ring-shaped HslU homohexamer. The assembly of the HslU/HslV complex is dependent on binding of ATP.

The protein localises to the cytoplasm. The enzyme catalyses ATP-dependent cleavage of peptide bonds with broad specificity.. Allosterically activated by HslU binding. Protease subunit of a proteasome-like degradation complex believed to be a general protein degrading machinery. This is ATP-dependent protease subunit HslV from Campylobacter fetus subsp. fetus (strain 82-40).